The chain runs to 221 residues: Peroxiredoxin 2 (221 aa).

Residues 15–170 (PQIGAPAPDF…IIRIIDALQT (156 aa)) form the Thioredoxin domain. Cysteine 56 serves as the catalytic Cysteine sulfenic acid (-SOH) intermediate. Substrate is bound at residue arginine 133. A disulfide bridge links cysteine 211 with cysteine 217.

Belongs to the peroxiredoxin family. Prx6 subfamily. Homodecamer. Pentamer of dimers that assemble into a ring structure.

Its subcellular location is the cytoplasm. The catalysed reaction is a hydroperoxide + [thioredoxin]-dithiol = an alcohol + [thioredoxin]-disulfide + H2O. In terms of biological role, thiol-specific peroxidase that catalyzes the reduction of hydrogen peroxide and organic hydroperoxides to water and alcohols, respectively. Plays a role in cell protection against oxidative stress by detoxifying peroxides. This chain is Peroxiredoxin 2, found in Caldanaerobacter subterraneus subsp. tengcongensis (strain DSM 15242 / JCM 11007 / NBRC 100824 / MB4) (Thermoanaerobacter tengcongensis).